The sequence spans 536 residues: Bifunctional purine biosynthesis protein PurH (536 aa).

In terms of domain architecture, MGS-like spans 8–158 (IPAPDEVRIK…KNHAYVTVVT (151 aa)).

It belongs to the PurH family.

The catalysed reaction is (6R)-10-formyltetrahydrofolate + 5-amino-1-(5-phospho-beta-D-ribosyl)imidazole-4-carboxamide = 5-formamido-1-(5-phospho-D-ribosyl)imidazole-4-carboxamide + (6S)-5,6,7,8-tetrahydrofolate. It carries out the reaction IMP + H2O = 5-formamido-1-(5-phospho-D-ribosyl)imidazole-4-carboxamide. Its pathway is purine metabolism; IMP biosynthesis via de novo pathway; 5-formamido-1-(5-phospho-D-ribosyl)imidazole-4-carboxamide from 5-amino-1-(5-phospho-D-ribosyl)imidazole-4-carboxamide (10-formyl THF route): step 1/1. It functions in the pathway purine metabolism; IMP biosynthesis via de novo pathway; IMP from 5-formamido-1-(5-phospho-D-ribosyl)imidazole-4-carboxamide: step 1/1. This Sinorhizobium medicae (strain WSM419) (Ensifer medicae) protein is Bifunctional purine biosynthesis protein PurH.